Here is a 166-residue protein sequence, read N- to C-terminus: MTTQGITVLGIDPGSRTTGWGIVREVSGVLTLVDCGAVRPRGDEFSDRLGAIYHGLHEVIARHMPDEASVENVFTAKNAASALKLGQARGAAVAACAAHHLPVASYAPTEIKKTIVGVGRAEKEQVSFMVARLLGVKGDWGPDTGDALAAAICHLNMRRLRRLAAG.

Residues aspartate 12, glutamate 71, and aspartate 143 contribute to the active site. Mg(2+) contacts are provided by aspartate 12, glutamate 71, and aspartate 143.

This sequence belongs to the RuvC family. Homodimer which binds Holliday junction (HJ) DNA. The HJ becomes 2-fold symmetrical on binding to RuvC with unstacked arms; it has a different conformation from HJ DNA in complex with RuvA. In the full resolvosome a probable DNA-RuvA(4)-RuvB(12)-RuvC(2) complex forms which resolves the HJ. Mg(2+) is required as a cofactor.

The protein resides in the cytoplasm. The catalysed reaction is Endonucleolytic cleavage at a junction such as a reciprocal single-stranded crossover between two homologous DNA duplexes (Holliday junction).. Functionally, the RuvA-RuvB-RuvC complex processes Holliday junction (HJ) DNA during genetic recombination and DNA repair. Endonuclease that resolves HJ intermediates. Cleaves cruciform DNA by making single-stranded nicks across the HJ at symmetrical positions within the homologous arms, yielding a 5'-phosphate and a 3'-hydroxyl group; requires a central core of homology in the junction. The consensus cleavage sequence is 5'-(A/T)TT(C/G)-3'. Cleavage occurs on the 3'-side of the TT dinucleotide at the point of strand exchange. HJ branch migration catalyzed by RuvA-RuvB allows RuvC to scan DNA until it finds its consensus sequence, where it cleaves and resolves the cruciform DNA. The protein is Crossover junction endodeoxyribonuclease RuvC of Oleidesulfovibrio alaskensis (strain ATCC BAA-1058 / DSM 17464 / G20) (Desulfovibrio alaskensis).